Here is an 888-residue protein sequence, read N- to C-terminus: G-protein coupled receptor family C group 6 member A (888 aa).

Residues 1–15 (MALLMTCFVIVFAAS) form the signal peptide. Residues 16 to 568 (QPCQTPDDLV…KEMEYLDSLA (553 aa)) are Extracellular-facing. 4 N-linked (GlcNAc...) asparagine glycosylation sites follow: asparagine 251, asparagine 322, asparagine 532, and asparagine 544. Residues 569–589 (ILLLALSLLGILFVLAIGIIF) form a helical membrane-spanning segment. Topologically, residues 590–604 (TRNLNTPVVKSSGEL) are cytoplasmic. The chain crosses the membrane as a helical span at residues 605–625 (MVRYVILFCHFLNFAGTGFFI). The Extracellular portion of the chain corresponds to 626-641 (REPQSFTCKTRQTLIC). A helical transmembrane segment spans residues 642–662 (MSFTLCISYILMKSLKILLAF). Residues 663–676 (SSKLQNFLKCFYKP) lie on the Cytoplasmic side of the membrane. The helical transmembrane segment at 677 to 697 (IPIIFTCTGIVVVCTLLIFAA) threads the bilayer. Topologically, residues 698–718 (PAVGQNVSLPRVIIFECEEGS) are extracellular. The chain crosses the membrane as a helical span at residues 719-739 (ILAFGSMLGYAAILAFMCFIC). Topologically, residues 740 to 754 (AFKGRKFPENYNEAK) are cytoplasmic. Residues 755-775 (FITFGMLIYFIAWITFIPIYT) form a helical membrane-spanning segment. The Extracellular segment spans residues 776–779 (FGKY). The helical transmembrane segment at 780-800 (MLVVEIIIILISNYGICCMFF) threads the bilayer. Over 801 to 888 (PKCYVILSKQ…ALPPKRISSI (88 aa)) the chain is Cytoplasmic.

This sequence belongs to the G-protein coupled receptor 3 family. Homodimer; disulfide-linked.

It localises to the cell membrane. In terms of biological role, receptor activated by multiple ligands, including osteocalcin (BGLAP), basic amino acids, and various cations. Activated by amino acids with a preference for basic amino acids such as L-Lys, L-Arg and L-ornithine but also by small and polar amino acids. The L-alpha amino acids respond is augmented by divalent cations Ca(2+) and Mg(2+). Seems to act through a G(q)/G(11) and G(i)-coupled pathway. Regulates testosterone production by acting as a ligand for uncarboxylated osteocalcin hormone: osteocalcin-binding at the surface of Leydig cells initiates a signaling response that promotes the expression of enzymes required for testosterone synthesis in a CREB-dependent manner. Mediates the non-genomic effects of androgens in multiple tissue. May coordinate nutritional and hormonal anabolic signals through the sensing of extracellular amino acids, osteocalcin, divalent ions and its responsiveness to anabolic steroids. The chain is G-protein coupled receptor family C group 6 member A (GPRC6A) from Bos taurus (Bovine).